The sequence spans 214 residues: 3,4-dihydroxy-2-butanone 4-phosphate synthase (214 aa).

Residues 40–41, Asp45, 153–157, and Glu177 contribute to the D-ribulose 5-phosphate site; these read RE and RRGHT. Glu41 contacts Mg(2+). Residue His156 participates in Mg(2+) binding.

This sequence belongs to the DHBP synthase family. As to quaternary structure, homodimer. Mg(2+) serves as cofactor. Requires Mn(2+) as cofactor.

The catalysed reaction is D-ribulose 5-phosphate = (2S)-2-hydroxy-3-oxobutyl phosphate + formate + H(+). Its pathway is cofactor biosynthesis; riboflavin biosynthesis; 2-hydroxy-3-oxobutyl phosphate from D-ribulose 5-phosphate: step 1/1. Its function is as follows. Catalyzes the conversion of D-ribulose 5-phosphate to formate and 3,4-dihydroxy-2-butanone 4-phosphate. The protein is 3,4-dihydroxy-2-butanone 4-phosphate synthase of Rhodospirillum rubrum (strain ATCC 11170 / ATH 1.1.1 / DSM 467 / LMG 4362 / NCIMB 8255 / S1).